The sequence spans 335 residues: Tetraacyldisaccharide 4'-kinase (335 aa).

Residue 62–69 (NVGGTGKT) coordinates ATP.

The protein belongs to the LpxK family.

The enzyme catalyses a lipid A disaccharide + ATP = a lipid IVA + ADP + H(+). It functions in the pathway glycolipid biosynthesis; lipid IV(A) biosynthesis; lipid IV(A) from (3R)-3-hydroxytetradecanoyl-[acyl-carrier-protein] and UDP-N-acetyl-alpha-D-glucosamine: step 6/6. Functionally, transfers the gamma-phosphate of ATP to the 4'-position of a tetraacyldisaccharide 1-phosphate intermediate (termed DS-1-P) to form tetraacyldisaccharide 1,4'-bis-phosphate (lipid IVA). This Methylobacillus flagellatus (strain ATCC 51484 / DSM 6875 / VKM B-1610 / KT) protein is Tetraacyldisaccharide 4'-kinase.